We begin with the raw amino-acid sequence, 109 residues long: Cytochrome c (109 aa).

Positions 25, 28, 29, and 88 each coordinate heme c.

Belongs to the cytochrome c family. Binds 1 heme c group covalently per subunit.

It is found in the mitochondrion intermembrane space. Its function is as follows. Electron carrier protein. The oxidized form of the cytochrome c heme group can accept an electron from the heme group of the cytochrome c1 subunit of cytochrome reductase. Cytochrome c then transfers this electron to the cytochrome oxidase complex, the final protein carrier in the mitochondrial electron-transport chain. This is Cytochrome c from Tetrahymena pyriformis.